A 225-amino-acid polypeptide reads, in one-letter code: Ribonuclease 3 (225 aa).

An RNase III domain is found at 7-129 (IPRLCRTLGY…IIGAIYLDSD (123 aa)). Glutamate 42 contributes to the Mg(2+) binding site. The active site involves aspartate 46. The Mg(2+) site is built by aspartate 115 and glutamate 118. Residue glutamate 118 is part of the active site. One can recognise a DRBM domain in the interval 155-225 (DPKTLLQEYL…AAQVLELIKK (71 aa)).

The protein belongs to the ribonuclease III family. As to quaternary structure, homodimer. Requires Mg(2+) as cofactor.

It localises to the cytoplasm. It catalyses the reaction Endonucleolytic cleavage to 5'-phosphomonoester.. Functionally, digests double-stranded RNA. Involved in the processing of primary rRNA transcript to yield the immediate precursors to the large and small rRNAs (23S and 16S). Processes some mRNAs, and tRNAs when they are encoded in the rRNA operon. Processes pre-crRNA and tracrRNA of type II CRISPR loci if present in the organism. The sequence is that of Ribonuclease 3 from Shewanella pealeana (strain ATCC 700345 / ANG-SQ1).